The chain runs to 360 residues: DNA replication and repair protein RecF (360 aa).

Position 30–37 (30–37 (GHNGSGKT)) interacts with ATP.

It belongs to the RecF family.

The protein localises to the cytoplasm. The RecF protein is involved in DNA metabolism; it is required for DNA replication and normal SOS inducibility. RecF binds preferentially to single-stranded, linear DNA. It also seems to bind ATP. This is DNA replication and repair protein RecF from Shewanella amazonensis (strain ATCC BAA-1098 / SB2B).